A 247-amino-acid chain; its full sequence is MATNEDQKQTESGRHQEVGHKSLLQSDALYQYILETSVFPREHEAMKELREVTAKHPWNIMTTSADEGQFLSMLLKLINAKNTMEIGVYTGYSLLATALAIPEDGKILAMDINKENYELGLPVIKKAGVDHKIDFREGPALPVLDEMIKDEKNHGSYDFIFVDADKDNYLNYHKRLIDLVKVGGVIGYDNTLWNGSVVAPPDAPLRKYVRYYRDFVLELNKALAVDPRIEICMLPVGDGITICRRIK.

Lysine 21 is a binding site for substrate. S-adenosyl-L-methionine contacts are provided by residues threonine 63, glutamate 85, 87–88 (GV), serine 93, aspartate 111, and alanine 140. A substrate-binding site is contributed by aspartate 163. Position 163 (aspartate 163) interacts with a divalent metal cation. Position 165 (aspartate 165) interacts with S-adenosyl-L-methionine. A divalent metal cation contacts are provided by aspartate 189 and asparagine 190. Asparagine 194 is a substrate binding site.

Belongs to the class I-like SAM-binding methyltransferase superfamily. Cation-dependent O-methyltransferase family. CCoAMT subfamily. As to quaternary structure, homodimer. The cofactor is Ca(2+). Requires Mg(2+) as cofactor. Zn(2+) is required as a cofactor.

The catalysed reaction is (E)-caffeoyl-CoA + S-adenosyl-L-methionine = (E)-feruloyl-CoA + S-adenosyl-L-homocysteine + H(+). The protein operates within aromatic compound metabolism; phenylpropanoid biosynthesis. Functionally, methylates caffeoyl-CoA to feruloyl-CoA and 5-hydroxyferuloyl-CoA to sinapoyl-CoA. Plays a role in the synthesis of feruloylated polysaccharides. Involved in the reinforcement of the plant cell wall. Also involved in the responding to wounding or pathogen challenge by the increased formation of cell wall-bound ferulic acid polymers. This is Caffeoyl-CoA O-methyltransferase (CCOMT) from Medicago sativa (Alfalfa).